We begin with the raw amino-acid sequence, 424 residues long: Adenylosuccinate synthetase (424 aa).

GTP contacts are provided by residues glycine 11–lysine 17 and glycine 39–threonine 41. Aspartate 12 serves as the catalytic Proton acceptor. Mg(2+) contacts are provided by aspartate 12 and glycine 39. IMP is bound by residues aspartate 12–lysine 15, asparagine 37–histidine 40, threonine 127, arginine 141, glutamine 223, threonine 238, and arginine 302. The active-site Proton donor is histidine 40. Threonine 298–arginine 304 contacts substrate. Residues arginine 304, lysine 330–aspartate 332, and serine 412–glycine 414 each bind GTP.

This sequence belongs to the adenylosuccinate synthetase family. In terms of assembly, homodimer. It depends on Mg(2+) as a cofactor.

It is found in the cytoplasm. It catalyses the reaction IMP + L-aspartate + GTP = N(6)-(1,2-dicarboxyethyl)-AMP + GDP + phosphate + 2 H(+). The protein operates within purine metabolism; AMP biosynthesis via de novo pathway; AMP from IMP: step 1/2. Plays an important role in the de novo pathway of purine nucleotide biosynthesis. Catalyzes the first committed step in the biosynthesis of AMP from IMP. The sequence is that of Adenylosuccinate synthetase from Methanosarcina barkeri (strain Fusaro / DSM 804).